The sequence spans 281 residues: Endochitinase B (281 aa).

Positions 1–33 (MAMAKAGAPRVSAAQLVTLGLSLLCAVAGPAAA) are cleaved as a signal peptide. One can recognise a Chitin-binding type-1 domain in the interval 34–68 (QNCGCQPNVCCSKFGYCGTTDEYCGDGCQSGPCRS). 4 disulfide bridges follow: cysteine 36–cysteine 44, cysteine 38–cysteine 50, cysteine 43–cysteine 57, and cysteine 61–cysteine 66. Residues 69 to 78 (GGGGSSGGGG) are hinge region (Gly-rich). The interval 79 to 281 (ANVASVVTGS…GVDPGPNLTC (203 aa)) is catalytic. Cysteine 101 and cysteine 150 form a disulfide bridge. Glutamate 145 serves as the catalytic Proton donor. Residue asparagine 156 is glycosylated (N-linked (GlcNAc...) asparagine). 2 cysteine pairs are disulfide-bonded: cysteine 162–cysteine 171 and cysteine 249–cysteine 281. A glycan (N-linked (GlcNAc...) asparagine) is linked at asparagine 278.

It belongs to the glycosyl hydrolase 19 family. Chitinase class I subfamily.

The protein resides in the secreted. It carries out the reaction Random endo-hydrolysis of N-acetyl-beta-D-glucosaminide (1-&gt;4)-beta-linkages in chitin and chitodextrins.. Its function is as follows. Defense against chitin-containing fungal pathogens. Its action is countered by fungal polyglycine hydrolases, that cleaves within its hinge region (Gly-rich) to disrupt chitin-binding. In Zea mays (Maize), this protein is Endochitinase B.